The chain runs to 449 residues: Interferon-related developmental regulator 1 (449 aa).

Over residues 1-10 (MPKNKKRNAP) the composition is skewed to basic residues. The tract at residues 1-42 (MPKNKKRNAPHRGGGGGGGSGAATSAATAGGPHRTVQPFSDE) is disordered. The span at 12–21 (RGGGGGGGSG) shows a compositional bias: gly residues. Positions 22–31 (AATSAATAGG) are enriched in low complexity.

Belongs to the IFRD family. In terms of assembly, interacts with PSIP1/LEDGF.

Could play a role in regulating gene activity in the proliferative and/or differentiative pathways induced by NGF. May be an autocrine factor that attenuates or amplifies the initial ligand-induced signal. This is Interferon-related developmental regulator 1 (Ifrd1) from Mus musculus (Mouse).